The sequence spans 347 residues: NADH-ubiquinone oxidoreductase chain 2 (347 aa).

Transmembrane regions (helical) follow at residues 3-23 (PPIL…VMTS), 25-45 (HWML…PILM), 59-79 (YFLT…INLL), 96-116 (ILMT…FWVP), 122-142 (ISLS…LSVL), 149-169 (INPN…GWGG), 178-198 (IMAY…LYNP), 201-221 (MFLN…LFMI), 237-257 (APLI…LPPL), 274-294 (EMII…YFYM), and 323-343 (MIFL…TPMI).

This sequence belongs to the complex I subunit 2 family. As to quaternary structure, core subunit of respiratory chain NADH dehydrogenase (Complex I) which is composed of 45 different subunits. Interacts with TMEM242.

It localises to the mitochondrion inner membrane. It carries out the reaction a ubiquinone + NADH + 5 H(+)(in) = a ubiquinol + NAD(+) + 4 H(+)(out). Functionally, core subunit of the mitochondrial membrane respiratory chain NADH dehydrogenase (Complex I) which catalyzes electron transfer from NADH through the respiratory chain, using ubiquinone as an electron acceptor. Essential for the catalytic activity and assembly of complex I. The sequence is that of NADH-ubiquinone oxidoreductase chain 2 from Civettictis civetta (African civet).